We begin with the raw amino-acid sequence, 563 residues long: Sperm-tail PG-rich repeat-containing protein 2 (563 aa).

STPGR repeat units lie at residues 21–34 (VGPG…PKQQ), 63–73 (PGPAHYNVSQA), and 97–107 (GPGPASYDCPY). The tract at residues 131 to 163 (IPSIPSSGKSHGYHLNEDDTIMRRTPPSSDKTM) is disordered. STPGR repeat units lie at residues 200–219 (GPGP…YENI), 250–263 (PGPG…QFDH), 292–321 (TPAP…FGQR), 334–353 (LPGP…QVKK), 423–438 (LPAP…YDMS), 473–483 (GPGPATYNPIL), and 507–518 (SPGPTTYELSPF).

This chain is Sperm-tail PG-rich repeat-containing protein 2 (Stpg2), found in Rattus norvegicus (Rat).